We begin with the raw amino-acid sequence, 239 residues long: RBPJ-interacting and tubulin-associated protein 1 (239 aa).

The Nuclear export signal signature appears at 12–24 (LDLSITGHSTALP). Disordered stretches follow at residues 62-97 (APPS…TPRK) and 149-239 (LVQQ…PPWK). Residues 93–109 (GTPRKKIQYRVKSRTPS) carry the Nuclear localization signal motif. Residues 129 to 158 (WVKKEDTVKIRPLLWSPSPRLVQQSSMQNA) are interaction with RBPJ/RBPSUH. Composition is skewed to polar residues over residues 149 to 159 (LVQQSSMQNAK) and 203 to 221 (RQRQ…SCSG). Residues 158–239 (AKQGPLRAVH…VKMQERPPWK (82 aa)) are interaction with tubulin.

Belongs to the RITA family. As to quaternary structure, interacts with rbpj/rbpsuh.

It localises to the cytoplasm. The protein resides in the nucleus. Tubulin-binding protein that acts as a negative regulator of Notch signaling pathway. Shuttles between the cytoplasm and the nucleus and mediates the nuclear export of rbpj/rbpsuh, thereby preventing the interaction between rbpj/rbpsuh and NICD product of Notch proteins (Notch intracellular domain), leading to down-regulate Notch-mediated transcription. May play a role in neurogenesis. The polypeptide is RBPJ-interacting and tubulin-associated protein 1 (rita1) (Xenopus laevis (African clawed frog)).